The primary structure comprises 237 residues: Putative N-acetylmannosamine-6-phosphate 2-epimerase (237 aa).

The protein belongs to the NanE family.

It carries out the reaction an N-acyl-D-glucosamine 6-phosphate = an N-acyl-D-mannosamine 6-phosphate. It participates in amino-sugar metabolism; N-acetylneuraminate degradation; D-fructose 6-phosphate from N-acetylneuraminate: step 3/5. In terms of biological role, converts N-acetylmannosamine-6-phosphate (ManNAc-6-P) to N-acetylglucosamine-6-phosphate (GlcNAc-6-P). In Listeria monocytogenes serovar 1/2a (strain ATCC BAA-679 / EGD-e), this protein is Putative N-acetylmannosamine-6-phosphate 2-epimerase.